The sequence spans 474 residues: Glycogen synthase (474 aa).

K15 contacts ADP-alpha-D-glucose.

Belongs to the glycosyltransferase 1 family. Bacterial/plant glycogen synthase subfamily.

The enzyme catalyses [(1-&gt;4)-alpha-D-glucosyl](n) + ADP-alpha-D-glucose = [(1-&gt;4)-alpha-D-glucosyl](n+1) + ADP + H(+). The protein operates within glycan biosynthesis; glycogen biosynthesis. Synthesizes alpha-1,4-glucan chains using ADP-glucose. This chain is Glycogen synthase, found in Chlamydia trachomatis serovar L2b (strain UCH-1/proctitis).